A 186-amino-acid polypeptide reads, in one-letter code: Ribosome-recycling factor (186 aa).

Belongs to the RRF family.

It is found in the cytoplasm. Its function is as follows. Responsible for the release of ribosomes from messenger RNA at the termination of protein biosynthesis. May increase the efficiency of translation by recycling ribosomes from one round of translation to another. The sequence is that of Ribosome-recycling factor from Coprothermobacter proteolyticus (strain ATCC 35245 / DSM 5265 / OCM 4 / BT).